Consider the following 152-residue polypeptide: Ribosome maturation factor RimP (152 aa).

It belongs to the RimP family.

Its subcellular location is the cytoplasm. Its function is as follows. Required for maturation of 30S ribosomal subunits. The polypeptide is Ribosome maturation factor RimP (Pseudoalteromonas atlantica (strain T6c / ATCC BAA-1087)).